A 243-amino-acid chain; its full sequence is Probable 2-phosphosulfolactate phosphatase (243 aa).

This sequence belongs to the ComB family. It depends on Mg(2+) as a cofactor.

The enzyme catalyses (2R)-O-phospho-3-sulfolactate + H2O = (2R)-3-sulfolactate + phosphate. The protein is Probable 2-phosphosulfolactate phosphatase of Synechococcus sp. (strain CC9605).